We begin with the raw amino-acid sequence, 551 residues long: Meiotically up-regulated gene 184 protein (551 aa).

A J domain is found at 12–78 (DYYAILKLQK…TKRLIYDQLF (67 aa)). A compositionally biased stretch (polar residues) spans 85 to 122 (RSQYKPNSTSNPSKHTSAYASYNKGKNSKWSSPFASTT). Disordered regions lie at residues 85 to 153 (RSQY…FPRD), 176 to 226 (RQEP…SVYK), and 334 to 359 (EAES…TRNN). Positions 124-133 (KPQESSEKYS) are enriched in basic and acidic residues. The span at 134-146 (KKSSTRKKEHFNK) shows a compositional bias: basic residues. 2 stretches are compositionally biased toward basic and acidic residues: residues 176-187 (RQEPESLKKENN) and 203-219 (GPKD…KIPE).

It localises to the cytoplasm. It is found in the cytoskeleton. Functionally, has a role in sporulation. The protein is Meiotically up-regulated gene 184 protein (mug184) of Schizosaccharomyces pombe (strain 972 / ATCC 24843) (Fission yeast).